The following is a 314-amino-acid chain: 2,3,4,5-tetrahydropyridine-2,6-dicarboxylate N-succinyltransferase (314 aa).

Positions 163 and 180 each coordinate Mg(2+). The active-site Acyl-anhydride intermediate is Glu-196. Residues Arg-198, Gly-213, Ser-216, Ala-239, Glu-254–Ala-255, Gly-262, Lys-274, and Arg-287–Ser-290 contribute to the succinyl-CoA site.

The protein belongs to the type 2 tetrahydrodipicolinate N-succinyltransferase family. As to quaternary structure, homotrimer.

The protein localises to the cytoplasm. It carries out the reaction (S)-2,3,4,5-tetrahydrodipicolinate + succinyl-CoA + H2O = (S)-2-succinylamino-6-oxoheptanedioate + CoA. It functions in the pathway amino-acid biosynthesis; L-lysine biosynthesis via DAP pathway; LL-2,6-diaminopimelate from (S)-tetrahydrodipicolinate (succinylase route): step 1/3. Catalyzes the conversion of the cyclic tetrahydrodipicolinate (THDP) into the acyclic N-succinyl-L-2-amino-6-oxopimelate using succinyl-CoA. The polypeptide is 2,3,4,5-tetrahydropyridine-2,6-dicarboxylate N-succinyltransferase (Mycolicibacterium smegmatis (strain ATCC 700084 / mc(2)155) (Mycobacterium smegmatis)).